The sequence spans 270 residues: Putative pyruvate, phosphate dikinase regulatory protein (270 aa).

Position 148–155 (148–155 (GISRTSKT)) interacts with ADP.

Belongs to the pyruvate, phosphate/water dikinase regulatory protein family. PDRP subfamily.

It catalyses the reaction N(tele)-phospho-L-histidyl/L-threonyl-[pyruvate, phosphate dikinase] + ADP = N(tele)-phospho-L-histidyl/O-phospho-L-threonyl-[pyruvate, phosphate dikinase] + AMP + H(+). The enzyme catalyses N(tele)-phospho-L-histidyl/O-phospho-L-threonyl-[pyruvate, phosphate dikinase] + phosphate + H(+) = N(tele)-phospho-L-histidyl/L-threonyl-[pyruvate, phosphate dikinase] + diphosphate. Bifunctional serine/threonine kinase and phosphorylase involved in the regulation of the pyruvate, phosphate dikinase (PPDK) by catalyzing its phosphorylation/dephosphorylation. This chain is Putative pyruvate, phosphate dikinase regulatory protein, found in Bacillus mycoides (strain KBAB4) (Bacillus weihenstephanensis).